Consider the following 241-residue polypeptide: MKYQTLSGLLALSLLFGCSSSPDVVPDVPPSQLYSEAQTALQSGTWLTAIEKLEALDSRYPFGAYSEQVQLDLIYAYYKNDDLALGLATIERFTRLNPTHEKMDWVLYMRGLTHMAQDRNFMHDLFNIDRRDRDPEPVKAAFADFKKLLQRYPNSPYAEDAQRRMFALKNRLAEYDLATADFYLRREAWIAAINRTQELQKTYPDTEAARKSLEIQLEAYQQLGLTDAIERTKQLMQLNPL.

Positions 1–17 are cleaved as a signal peptide; sequence MKYQTLSGLLALSLLFG. Cys18 carries the N-palmitoyl cysteine lipid modification. Cys18 carries S-diacylglycerol cysteine lipidation.

This sequence belongs to the BamD family. Part of the Bam complex.

The protein resides in the cell outer membrane. Functionally, part of the outer membrane protein assembly complex, which is involved in assembly and insertion of beta-barrel proteins into the outer membrane. This chain is Outer membrane protein assembly factor BamD, found in Vibrio cholerae serotype O1 (strain ATCC 39315 / El Tor Inaba N16961).